The following is a 147-amino-acid chain: Sec-independent protein translocase protein TatB (147 aa).

Residues 2–22 (FDGIGFMELLLIGVLGLVVLG) form a helical membrane-spanning segment. The span at 85–97 (QLKQAAQSVNRPY) shows a compositional bias: polar residues. The interval 85–147 (QLKQAAQSVN…DTRSNPKANG (63 aa)) is disordered. Residues 113 to 133 (ASQSVSTEASPSASSAPTSES) are compositionally biased toward low complexity.

This sequence belongs to the TatB family. The Tat system comprises two distinct complexes: a TatABC complex, containing multiple copies of TatA, TatB and TatC subunits, and a separate TatA complex, containing only TatA subunits. Substrates initially bind to the TatABC complex, which probably triggers association of the separate TatA complex to form the active translocon.

The protein resides in the cell inner membrane. Functionally, part of the twin-arginine translocation (Tat) system that transports large folded proteins containing a characteristic twin-arginine motif in their signal peptide across membranes. Together with TatC, TatB is part of a receptor directly interacting with Tat signal peptides. TatB may form an oligomeric binding site that transiently accommodates folded Tat precursor proteins before their translocation. This chain is Sec-independent protein translocase protein TatB, found in Shewanella sp. (strain ANA-3).